The primary structure comprises 320 residues: Nicotianamine synthase 3 (320 aa).

Belongs to the nicotianamine synthase (NAS)-like family. As to expression, in shoots.

The enzyme catalyses 3 S-adenosyl-L-methionine = nicotianamine + 3 S-methyl-5'-thioadenosine + 3 H(+). Its function is as follows. Synthesizes nicotianamine, a polyamine which serves as a sensor for the physiological iron status within the plant, and/or might be involved in the transport of iron. In Arabidopsis thaliana (Mouse-ear cress), this protein is Nicotianamine synthase 3 (NAS3).